The primary structure comprises 321 residues: Fibronectin type III domain-containing protein 8 (321 aa).

The Fibronectin type-III domain occupies 175–277 (VPEAPFVCEH…KPYKFATVAT (103 aa)).

This is Fibronectin type III domain-containing protein 8 (FNDC8) from Bos taurus (Bovine).